Reading from the N-terminus, the 366-residue chain is S-adenosylmethionine:tRNA ribosyltransferase-isomerase (366 aa).

This sequence belongs to the QueA family. Monomer.

The protein localises to the cytoplasm. The enzyme catalyses 7-aminomethyl-7-carbaguanosine(34) in tRNA + S-adenosyl-L-methionine = epoxyqueuosine(34) in tRNA + adenine + L-methionine + 2 H(+). It participates in tRNA modification; tRNA-queuosine biosynthesis. Its function is as follows. Transfers and isomerizes the ribose moiety from AdoMet to the 7-aminomethyl group of 7-deazaguanine (preQ1-tRNA) to give epoxyqueuosine (oQ-tRNA). This chain is S-adenosylmethionine:tRNA ribosyltransferase-isomerase, found in Synechococcus sp. (strain CC9605).